We begin with the raw amino-acid sequence, 285 residues long: tRNA (cytidine(32)/guanosine(34)-2'-O)-methyltransferase (285 aa).

Gly53, Trp55, Asp83, Asp99, and Asp124 together coordinate S-adenosyl-L-methionine. Catalysis depends on Lys164, which acts as the Proton acceptor.

It belongs to the class I-like SAM-binding methyltransferase superfamily. RNA methyltransferase RlmE family. TRM7 subfamily.

It is found in the cytoplasm. The enzyme catalyses cytidine(32)/guanosine(34) in tRNA + 2 S-adenosyl-L-methionine = 2'-O-methylcytidine(32)/2'-O-methylguanosine(34) in tRNA + 2 S-adenosyl-L-homocysteine + 2 H(+). Functionally, methylates the 2'-O-ribose of nucleotides at positions 32 and 34 of the tRNA anticodon loop of substrate tRNAs. Requires trm732 for methylation of the cytidine at position 32 of the anticodon loop of substrate tRNAs. Requires trm734 for methylation of the nucleotide at position 34 of the anticodon loop of substrate tRNAs. Methylates tRNA(Phe). The protein is tRNA (cytidine(32)/guanosine(34)-2'-O)-methyltransferase of Schizosaccharomyces pombe (strain 972 / ATCC 24843) (Fission yeast).